A 469-amino-acid chain; its full sequence is 3-isopropylmalate dehydratase large subunit (469 aa).

[4Fe-4S] cluster is bound by residues Cys347, Cys407, and Cys410.

The protein belongs to the aconitase/IPM isomerase family. LeuC type 1 subfamily. As to quaternary structure, heterodimer of LeuC and LeuD. Requires [4Fe-4S] cluster as cofactor.

The catalysed reaction is (2R,3S)-3-isopropylmalate = (2S)-2-isopropylmalate. The protein operates within amino-acid biosynthesis; L-leucine biosynthesis; L-leucine from 3-methyl-2-oxobutanoate: step 2/4. In terms of biological role, catalyzes the isomerization between 2-isopropylmalate and 3-isopropylmalate, via the formation of 2-isopropylmaleate. The sequence is that of 3-isopropylmalate dehydratase large subunit from Prochlorococcus marinus (strain MIT 9515).